A 238-amino-acid polypeptide reads, in one-letter code: uncharacterized protein (238 aa).

An S4 RNA-binding domain is found at 1-64 (MRLDKYLSKS…KPKKNVYLML (64 aa)). Catalysis depends on aspartate 103, which acts as the Nucleophile.

Belongs to the pseudouridine synthase RsuA family.

It catalyses the reaction a uridine in RNA = a pseudouridine in RNA. This is an uncharacterized protein from Aquifex aeolicus (strain VF5).